The following is a 561-amino-acid chain: Urocanate hydratase (561 aa).

Residues 52 to 53 (GG), glutamine 130, 176 to 178 (GMG), glutamate 196, arginine 201, 242 to 243 (NA), 263 to 267 (QTSAH), 273 to 274 (YL), and tyrosine 322 each bind NAD(+). The active site involves cysteine 410. Glycine 492 serves as a coordination point for NAD(+).

This sequence belongs to the urocanase family. NAD(+) serves as cofactor.

Its subcellular location is the cytoplasm. It carries out the reaction 4-imidazolone-5-propanoate = trans-urocanate + H2O. Its pathway is amino-acid degradation; L-histidine degradation into L-glutamate; N-formimidoyl-L-glutamate from L-histidine: step 2/3. Catalyzes the conversion of urocanate to 4-imidazolone-5-propionate. The protein is Urocanate hydratase of Salmonella arizonae (strain ATCC BAA-731 / CDC346-86 / RSK2980).